Here is a 194-residue protein sequence, read N- to C-terminus: MNLIPTVIETTNRGERAYDIYSRLLKDRIIMLGSAIDDNVANSIVSQLLFLQAQDAEKDIYLYINSPGGSVTAGFAIYDTIQHIKPDVQTICIGMAASMGSFLLAAGAKGKRFALPNAEVMIHQPLGGAQGQATEIEIAATHILKTRAKLNKILAERTGQSIEQIEKDTDRDNFLTADEAKEYGLIDEVMQPEK.

Ser-98 serves as the catalytic Nucleophile. The active site involves His-123.

This sequence belongs to the peptidase S14 family. As to quaternary structure, fourteen ClpP subunits assemble into 2 heptameric rings which stack back to back to give a disk-like structure with a central cavity, resembling the structure of eukaryotic proteasomes.

It localises to the cytoplasm. The enzyme catalyses Hydrolysis of proteins to small peptides in the presence of ATP and magnesium. alpha-casein is the usual test substrate. In the absence of ATP, only oligopeptides shorter than five residues are hydrolyzed (such as succinyl-Leu-Tyr-|-NHMec, and Leu-Tyr-Leu-|-Tyr-Trp, in which cleavage of the -Tyr-|-Leu- and -Tyr-|-Trp bonds also occurs).. In terms of biological role, cleaves peptides in various proteins in a process that requires ATP hydrolysis. Has a chymotrypsin-like activity. Plays a major role in the degradation of misfolded proteins. In Staphylococcus carnosus (strain TM300), this protein is ATP-dependent Clp protease proteolytic subunit.